The chain runs to 246 residues: uncharacterized protein (246 aa).

The protein belongs to the BtpA family.

This is an uncharacterized protein from Archaeoglobus fulgidus (strain ATCC 49558 / DSM 4304 / JCM 9628 / NBRC 100126 / VC-16).